A 155-amino-acid chain; its full sequence is MTEEATTTLSSADIIEIMKLLPHRYPFLMVDKIIEIDGDNSAIGIKNVTVNEPHFTGHFPEAPIMPGVLLIEGMAQTAGAICAKKEGQPGNLVYFMTIENARFRKPVVPGDRVEFHVAKHKQRGNIWKFHCDAKVDGAVVAEADIGAMIVRKEQA.

His-58 is a catalytic residue.

It belongs to the thioester dehydratase family. FabZ subfamily.

Its subcellular location is the cytoplasm. The enzyme catalyses a (3R)-hydroxyacyl-[ACP] = a (2E)-enoyl-[ACP] + H2O. Functionally, involved in unsaturated fatty acids biosynthesis. Catalyzes the dehydration of short chain beta-hydroxyacyl-ACPs and long chain saturated and unsaturated beta-hydroxyacyl-ACPs. The chain is 3-hydroxyacyl-[acyl-carrier-protein] dehydratase FabZ from Rhizobium leguminosarum bv. trifolii (strain WSM2304).